The chain runs to 68 residues: Molybdenum-pterin-binding protein 1 (68 aa).

Residues 2 to 68 (SISARNQLKG…IKSTDVMILA (67 aa)) enclose the Mop domain.

In terms of biological role, binds one mole of molybdenum per mole of protein and contains a pterin. The protein is Molybdenum-pterin-binding protein 1 (mopI) of Clostridium pasteurianum.